We begin with the raw amino-acid sequence, 323 residues long: Aspartate carbamoyltransferase catalytic subunit (323 aa).

Carbamoyl phosphate contacts are provided by Arg-71 and Thr-72. Residue Lys-99 coordinates L-aspartate. The carbamoyl phosphate site is built by Arg-121, His-151, and Gln-154. Residues Arg-184 and Arg-239 each contribute to the L-aspartate site. Carbamoyl phosphate-binding residues include Gly-280 and Pro-281.

Belongs to the aspartate/ornithine carbamoyltransferase superfamily. ATCase family. In terms of assembly, heterododecamer (2C3:3R2) of six catalytic PyrB chains organized as two trimers (C3), and six regulatory PyrI chains organized as three dimers (R2).

It catalyses the reaction carbamoyl phosphate + L-aspartate = N-carbamoyl-L-aspartate + phosphate + H(+). It participates in pyrimidine metabolism; UMP biosynthesis via de novo pathway; (S)-dihydroorotate from bicarbonate: step 2/3. Catalyzes the condensation of carbamoyl phosphate and aspartate to form carbamoyl aspartate and inorganic phosphate, the committed step in the de novo pyrimidine nucleotide biosynthesis pathway. The protein is Aspartate carbamoyltransferase catalytic subunit of Ralstonia nicotianae (strain ATCC BAA-1114 / GMI1000) (Ralstonia solanacearum).